Here is a 110-residue protein sequence, read N- to C-terminus: UPF0122 protein RBAM_015800 (110 aa).

The protein belongs to the UPF0122 family.

Functionally, might take part in the signal recognition particle (SRP) pathway. This is inferred from the conservation of its genetic proximity to ftsY/ffh. May be a regulatory protein. This is UPF0122 protein RBAM_015800 from Bacillus velezensis (strain DSM 23117 / BGSC 10A6 / LMG 26770 / FZB42) (Bacillus amyloliquefaciens subsp. plantarum).